A 583-amino-acid chain; its full sequence is Aspartyl protease APCB1 (583 aa).

A helical membrane pass occupies residues 83-103; the sequence is LVLGLLGISLLAVAFYASVFP. The 362-residue stretch at 203 to 564 folds into the Peptidase A1 domain; the sequence is YYTRILVGKP…DNVKRRIGWM (362 aa). Residues D223 and D431 contribute to the active site.

Belongs to the peptidase A1 family. Interacts with BAG6 and BAGP1.

The protein resides in the membrane. Involved in proteolytic processing of BAG6 and plant basal immunity. The chain is Aspartyl protease APCB1 from Arabidopsis thaliana (Mouse-ear cress).